The primary structure comprises 1390 residues: Hepatocyte growth factor receptor (1390 aa).

A signal peptide spans Met-1–Gly-24. The Extracellular segment spans residues Glu-25–Thr-932. The region spanning Lys-27–Leu-515 is the Sema domain. Asn-45 is a glycosylation site (N-linked (GlcNAc...) asparagine). 4 cysteine pairs are disulfide-bonded: Cys-95-Cys-101, Cys-98-Cys-160, Cys-133-Cys-141, and Cys-172-Cys-175. N-linked (GlcNAc...) asparagine glycosylation is present at Asn-106. Residue Asn-149 is glycosylated (N-linked (GlcNAc...) asparagine). An N-linked (GlcNAc...) asparagine glycan is attached at Asn-202. Cystine bridges form between Cys-298–Cys-363 and Cys-385–Cys-397. 2 N-linked (GlcNAc...) asparagine glycosylation sites follow: Asn-399 and Asn-405. Intrachain disulfides connect Cys-520/Cys-538, Cys-526/Cys-561, Cys-529/Cys-545, and Cys-541/Cys-551. 3 consecutive IPT/TIG domains span residues Pro-563 to Val-655, Pro-657 to Arg-739, and Pro-742 to Val-836. An O-linked (Man) threonine glycan is attached at Thr-582. 2 N-linked (GlcNAc...) asparagine glycosylation sites follow: Asn-607 and Asn-635. 2 O-linked (Man) threonine glycosylation sites follow: Thr-676 and Thr-761. N-linked (GlcNAc...) asparagine glycosylation is found at Asn-785, Asn-879, and Asn-930. The chain crosses the membrane as a helical span at residues Gly-933–Leu-955. At Lys-956 to Ser-1390 the chain is on the cytoplasmic side. Residue Ser-966 is modified to Phosphoserine. Thr-977 carries the post-translational modification Phosphothreonine. Phosphoserine occurs at positions 990, 997, and 1000. Residue Tyr-1003 is modified to Phosphotyrosine. The Protein kinase domain occupies Val-1078–Ile-1345. Residues Ile-1084 to Val-1092 and Lys-1110 each bind ATP. The active-site Proton acceptor is Asp-1204. Residues Leu-1212–Ser-1390 are interaction with RANBP9. Tyr-1230 carries the post-translational modification Phosphotyrosine. A phosphotyrosine; by autocatalysis mark is found at Tyr-1234 and Tyr-1235. Thr-1289 is subject to Phosphothreonine. An interaction with MUC20 region spans residues Trp-1320–Val-1359. 2 positions are modified to phosphotyrosine; by autocatalysis: Tyr-1349 and Tyr-1356. Tyr-1365 is subject to Phosphotyrosine.

Belongs to the protein kinase superfamily. Tyr protein kinase family. In terms of assembly, heterodimer made of an alpha chain (50 kDa) and a beta chain (145 kDa) which are disulfide linked. Binds PLXNB1. Interacts when phosphorylated with downstream effectors including STAT3, PIK3R1, SRC, PCLG1, GRB2 and GAB1. Interacts with SPSB1, SPSB2 and SPSB4. Interacts with INPP5D/SHIP1. When phosphorylated at Tyr-1356, interacts with INPPL1/SHIP2. Interacts with RANBP9 and RANBP10, as well as SPSB1, SPSB2, SPSB3 and SPSB4. SPSB1 binding occurs in the presence and in the absence of HGF, however HGF treatment has a positive effect on this interaction. Interacts with MUC20; prevents interaction with GRB2 and suppresses hepatocyte growth factor-induced cell proliferation. Interacts with GRB10. Interacts with PTPN1 and PTPN2. Interacts with HSP90AA1 and HSP90AB1; the interaction suppresses MET kinase activity. Interacts with tensin TNS3. Interacts (when phosphorylated) with tensin TNS4 (via SH2 domain); the interaction increases MET protein stability by inhibiting MET endocytosis and subsequent lysosomal degradation. Post-translationally, autophosphorylated in response to ligand binding on Tyr-1234 and Tyr-1235 in the kinase domain leading to further phosphorylation of Tyr-1349 and Tyr-1356 in the C-terminal multifunctional docking site. Dephosphorylated by PTPRJ at Tyr-1349 and Tyr-1365. Dephosphorylated by PTPN1 and PTPN2. In terms of processing, ubiquitinated. Ubiquitination by CBL regulates the receptor stability and activity through proteasomal degradation. O-mannosylation of IPT/TIG domains by TMEM260 is required for protein maturation. O-mannosylated residues are composed of single mannose glycans that are not elongated or modified.

It is found in the membrane. The enzyme catalyses L-tyrosyl-[protein] + ATP = O-phospho-L-tyrosyl-[protein] + ADP + H(+). Its activity is regulated as follows. In its inactive state, the C-terminal tail interacts with the catalytic domain and inhibits the kinase activity. Upon ligand binding, the C-terminal tail is displaced and becomes phosphorylated, thus increasing the kinase activity. Functionally, receptor tyrosine kinase that transduces signals from the extracellular matrix into the cytoplasm by binding to hepatocyte growth factor/HGF ligand. Regulates many physiological processes including proliferation, scattering, morphogenesis and survival. Ligand binding at the cell surface induces autophosphorylation of MET on its intracellular domain that provides docking sites for downstream signaling molecules. Following activation by ligand, interacts with the PI3-kinase subunit PIK3R1, PLCG1, SRC, GRB2, STAT3 or the adapter GAB1. Recruitment of these downstream effectors by MET leads to the activation of several signaling cascades including the RAS-ERK, PI3 kinase-AKT, or PLCgamma-PKC. The RAS-ERK activation is associated with the morphogenetic effects while PI3K/AKT coordinates prosurvival effects. During embryonic development, MET signaling plays a role in gastrulation, development and migration of muscles and neuronal precursors, angiogenesis and kidney formation. In adults, participates in wound healing as well as organ regeneration and tissue remodeling. Also promotes differentiation and proliferation of hematopoietic cells. This Pan troglodytes (Chimpanzee) protein is Hepatocyte growth factor receptor (MET).